We begin with the raw amino-acid sequence, 339 residues long: Ferredoxin--NADP reductase (339 aa).

Positions 32, 40, 45, 85, 120, 287, and 327 each coordinate FAD.

This sequence belongs to the ferredoxin--NADP reductase type 2 family. In terms of assembly, homodimer. Requires FAD as cofactor.

The enzyme catalyses 2 reduced [2Fe-2S]-[ferredoxin] + NADP(+) + H(+) = 2 oxidized [2Fe-2S]-[ferredoxin] + NADPH. The sequence is that of Ferredoxin--NADP reductase from Wolbachia sp. subsp. Brugia malayi (strain TRS).